The chain runs to 242 residues: MSVFFVTGTDTSVGKTIVSRAIIQAMQNAGIQIVGYKPLACGQDDPVYTDVQESGQTDYDNMDNRDVLVLQDSTNEEVSYQDINSYTFAHTMPMLSQEGKHIDINKINTDLKRLSSRYQSVLVEGSFGWLTPINQDYTFASWAAEHKMPVVLVVGIKEGCMNHALLTVQSIEQMGLPLLGWVANRINPMLGHYAEIIEDLSKRIKAPLLGKIPYMHKPETQELGHYITDIDRLSYMKTEILK.

12 to 17 provides a ligand contact to ATP; it reads SVGKTI. T16 lines the Mg(2+) pocket. Residue K37 is part of the active site. D66 provides a ligand contact to ATP. Mg(2+)-binding residues include D66 and E124. An ATP-binding site is contributed by 184 to 185; the sequence is NR.

The protein belongs to the dethiobiotin synthetase family. In terms of assembly, homodimer. The cofactor is Mg(2+).

Its subcellular location is the cytoplasm. The enzyme catalyses (7R,8S)-7,8-diammoniononanoate + CO2 + ATP = (4R,5S)-dethiobiotin + ADP + phosphate + 3 H(+). It participates in cofactor biosynthesis; biotin biosynthesis; biotin from 7,8-diaminononanoate: step 1/2. Its function is as follows. Catalyzes a mechanistically unusual reaction, the ATP-dependent insertion of CO2 between the N7 and N8 nitrogen atoms of 7,8-diaminopelargonic acid (DAPA, also called 7,8-diammoniononanoate) to form a ureido ring. The protein is ATP-dependent dethiobiotin synthetase BioD of Mannheimia succiniciproducens (strain KCTC 0769BP / MBEL55E).